Consider the following 1127-residue polypeptide: Genome polyprotein (1127 aa).

Positions 1–15 (MNNQRKKARSTPFNM) are interaction with host EXOC1. Topologically, residues 1–101 (MNNQRKKARS…LNILNRRRRT (101 aa)) are cytoplasmic. The hydrophobic; homodimerization of capsid protein C stretch occupies residues 37-72 (MLQGRGPLKLFMALVALPRFLTIPPTAGILKRWGTI). Residues 101-114 (TAGVIIMLIPTVMA) constitute a propeptide, ER anchor for the capsid protein C, removed in mature form by serine protease NS3. Residues 102–122 (AGVIIMLIPTVMAFHLTTRNG) form a helical membrane-spanning segment. At 123-238 (EPHMIVSRQE…GAWKRACRME (116 aa)) the chain is on the extracellular side. An N-linked (GlcNAc...) asparagine; by host glycan is attached at Asn-183. The helical transmembrane segment at 239–259 (TWILRHPGFTIMAAILAYTIG) threads the bilayer. Residues 260–265 (TTHFQR) lie on the Cytoplasmic side of the membrane. The helical transmembrane segment at 266–280 (GLILILQTAVAPSMT) threads the bilayer. The Extracellular portion of the chain corresponds to 281–725 (MRCIGISNRD…LHQVFGAIYG (445 aa)). Disulfide bonds link Cys-283–Cys-310, Cys-340–Cys-401, Cys-354–Cys-385, and Cys-372–Cys-396. Residue Asn-347 is glycosylated (N-linked (GlcNAc...) asparagine; by host). Positions 378-391 (DRGWGNGCGLFGKG) are fusion peptide. The N-linked (GlcNAc...) asparagine; by host glycan is linked to Asn-433. Cystine bridges form between Cys-465–Cys-565 and Cys-582–Cys-613. A helical membrane pass occupies residues 726 to 746 (AAFSGVSWTMKILIGVIITWI). Topologically, residues 747–754 (GMNSRSTS) are cytoplasmic. Residues 755-773 (LSVSLVLVGVITLYLGAMV) form a helical membrane-spanning segment. Residues 774-1127 (QADSGCVVSW…ENLVTSLVTA (354 aa)) are Extracellular-facing. Cystine bridges form between Cys-779–Cys-790, Cys-830–Cys-918, Cys-954–Cys-998, Cys-1055–Cys-1104, and Cys-1066–Cys-1088. N-linked (GlcNAc...) asparagine; by host glycans are attached at residues Asn-905 and Asn-982.

As to quaternary structure, homodimer. Interacts (via N-terminus) with host EXOC1 (via C-terminus); this interaction results in EXOC1 degradation through the proteasome degradation pathway. In terms of assembly, forms heterodimers with envelope protein E in the endoplasmic reticulum and Golgi. Homodimer; in the endoplasmic reticulum and Golgi. Interacts with protein prM. Interacts with non-structural protein 1. As to quaternary structure, homodimer; Homohexamer when secreted. Interacts with envelope protein E. In terms of processing, specific enzymatic cleavages in vivo yield mature proteins. Cleavages in the lumen of endoplasmic reticulum are performed by host signal peptidase, wereas cleavages in the cytoplasmic side are performed by the Serine protease NS3. Signal cleavage at the 2K-4B site requires a prior NS3 protease-mediated cleavage at the 4A-2K site. Post-translationally, cleaved in post-Golgi vesicles by a host furin, releasing the mature small envelope protein M, and peptide pr. This cleavage is incomplete as up to 30% of viral particles still carry uncleaved prM. N-glycosylated. In terms of processing, N-glycosylated. The excreted form is glycosylated and this is required for efficient secretion of the protein from infected cells.

It is found in the virion. The protein localises to the host nucleus. It localises to the host cytoplasm. Its subcellular location is the host perinuclear region. The protein resides in the secreted. It is found in the virion membrane. The protein localises to the host endoplasmic reticulum membrane. Functionally, plays a role in virus budding by binding to the cell membrane and gathering the viral RNA into a nucleocapsid that forms the core of a mature virus particle. During virus entry, may induce genome penetration into the host cytoplasm after hemifusion induced by the surface proteins. Can migrate to the cell nucleus where it modulates host functions. Overcomes the anti-viral effects of host EXOC1 by sequestering and degrading the latter through the proteasome degradation pathway. Its function is as follows. Inhibits RNA silencing by interfering with host Dicer. In terms of biological role, prevents premature fusion activity of envelope proteins in trans-Golgi by binding to envelope protein E at pH6.0. After virion release in extracellular space, gets dissociated from E dimers. Acts as a chaperone for envelope protein E during intracellular virion assembly by masking and inactivating envelope protein E fusion peptide. prM is the only viral peptide matured by host furin in the trans-Golgi network probably to avoid catastrophic activation of the viral fusion activity in acidic GolGi compartment prior to virion release. prM-E cleavage is inefficient, and many virions are only partially matured. These uncleaved prM would play a role in immune evasion. Functionally, may play a role in virus budding. Exerts cytotoxic effects by activating a mitochondrial apoptotic pathway through M ectodomain. May display a viroporin activity. Its function is as follows. Binds to host cell surface receptor and mediates fusion between viral and cellular membranes. Envelope protein is synthesized in the endoplasmic reticulum in the form of heterodimer with protein prM. They play a role in virion budding in the ER, and the newly formed immature particle is covered with 60 spikes composed of heterodimer between precursor prM and envelope protein E. The virion is transported to the Golgi apparatus where the low pH causes dissociation of PrM-E heterodimers and formation of E homodimers. prM-E cleavage is inefficient, and many virions are only partially matured. These uncleaved prM would play a role in immune evasion. In terms of biological role, involved in immune evasion, pathogenesis and viral replication. Once cleaved off the polyprotein, is targeted to three destinations: the viral replication cycle, the plasma membrane and the extracellular compartment. Essential for viral replication. Required for formation of the replication complex and recruitment of other non-structural proteins to the ER-derived membrane structures. Excreted as a hexameric lipoparticle that plays a role against host immune response. Antagonizing the complement function. Binds to the host macrophages and dendritic cells. Inhibits signal transduction originating from Toll-like receptor 3 (TLR3). Disrupts the host endothelial glycocalyx layer of host pulmonary microvascular endothelial cells, inducing degradation of sialic acid and shedding of heparan sulfate proteoglycans. NS1 induces expression of sialidases, heparanase, and activates cathepsin L, which activates heparanase via enzymatic cleavage. These effects are probably linked to the endothelial hyperpermeability observed in severe dengue disease. In Dengue virus type 2 (strain China/D2-04) (DENV-2), this protein is Genome polyprotein.